The following is a 258-amino-acid chain: Acyl-[acyl-carrier-protein]--UDP-N-acetylglucosamine O-acyltransferase (258 aa).

Belongs to the transferase hexapeptide repeat family. LpxA subfamily. Homotrimer.

Its subcellular location is the cytoplasm. It carries out the reaction a (3R)-hydroxyacyl-[ACP] + UDP-N-acetyl-alpha-D-glucosamine = a UDP-3-O-[(3R)-3-hydroxyacyl]-N-acetyl-alpha-D-glucosamine + holo-[ACP]. It participates in glycolipid biosynthesis; lipid IV(A) biosynthesis; lipid IV(A) from (3R)-3-hydroxytetradecanoyl-[acyl-carrier-protein] and UDP-N-acetyl-alpha-D-glucosamine: step 1/6. In terms of biological role, involved in the biosynthesis of lipid A, a phosphorylated glycolipid that anchors the lipopolysaccharide to the outer membrane of the cell. The protein is Acyl-[acyl-carrier-protein]--UDP-N-acetylglucosamine O-acyltransferase of Pseudomonas fluorescens (strain Pf0-1).